Consider the following 314-residue polypeptide: Olfactory receptor 1E16 (314 aa).

Topologically, residues 1–29 (MTERNKTVISQFLLLGLPIPPEHQQLFYA) are extracellular. Residue Asn5 is glycosylated (N-linked (GlcNAc...) asparagine). Residues 30–50 (LFLVMYLTTVLGNLIIIILII) traverse the membrane as a helical segment. At 51–57 (LDSHLHT) the chain is on the cytoplasmic side. Residues 58–78 (PMYLFLSNLSFSDLCFSSVTM) traverse the membrane as a helical segment. The Extracellular segment spans residues 79-97 (PKLLQNMQSQVPSIPYAGC). Cys97 and Cys179 form a disulfide bridge. A helical membrane pass occupies residues 98-118 (LAQIYFFLFFGDLGNFLLVAM). At 119-143 (AYDRYVAICYPLHYTTIMSPRLCVS) the chain is on the cytoplasmic side. A helical membrane pass occupies residues 144-164 (LVVLSWVLTTFHAMLHTLLMA). The Extracellular segment spans residues 165-196 (RLSFCEDNVIPHYFCDMSALLKLACSDTRVNE). A helical membrane pass occupies residues 197–217 (VVIFIVASIFLVLPFALITMS). The Cytoplasmic portion of the chain corresponds to 218 to 239 (YVRIVSSILKVPSSQGIYKAFS). A helical transmembrane segment spans residues 240-260 (TCGSHLSVVSLFYGTVIGLYL). Over 261–271 (SPSSNNSTVKD) the chain is Extracellular. N-linked (GlcNAc...) asparagine glycosylation is found at Asn265 and Asn266. A helical transmembrane segment spans residues 272 to 292 (TVMSLMYTVVTPMLNPFIYSL). The Cytoplasmic portion of the chain corresponds to 293-314 (RNRDIKGALERVFCKRKIQLNL).

The protein belongs to the G-protein coupled receptor 1 family. In terms of tissue distribution, olfactory epithelium.

Its subcellular location is the cell membrane. In terms of biological role, odorant receptor. Activated by a lily-derived aldehyde as well as other odorants. May signal through an inositol 1,4,5-trisphosphate (IP3) second messenger system. This chain is Olfactory receptor 1E16, found in Mus musculus (Mouse).